Consider the following 271-residue polypeptide: Uridine-cytidine kinase 1-A (271 aa).

Residue 24–32 (GGTASGKST) participates in ATP binding. Substrate is bound by residues Asp81, Tyr109, His114, Arg163, Arg172, and Gln180. An ATP-binding site is contributed by Asp209. The disordered stretch occupies residues 241-271 (SQKRTFPGQGESGGLILPGKRTHLESSSRPH). The segment covering 262 to 271 (THLESSSRPH) has biased composition (basic and acidic residues).

This sequence belongs to the uridine kinase family.

It carries out the reaction uridine + ATP = UMP + ADP + H(+). The catalysed reaction is cytidine + ATP = CMP + ADP + H(+). Its pathway is pyrimidine metabolism; CTP biosynthesis via salvage pathway; CTP from cytidine: step 1/3. It functions in the pathway pyrimidine metabolism; UMP biosynthesis via salvage pathway; UMP from uridine: step 1/1. In terms of biological role, phosphorylates uridine and cytidine to uridine monophosphate and cytidine monophosphate. Does not phosphorylate deoxyribonucleosides or purine ribonucleosides. Can use ATP or GTP as a phosphate donor. In Xenopus laevis (African clawed frog), this protein is Uridine-cytidine kinase 1-A (uck1-a).